Reading from the N-terminus, the 227-residue chain is MAYPMQLGFQDATSPIMEELLHFHDHTLMIVFLISSLVLYIISLMLTTKLTHTSTMDAQEVETIWTILPAIILILIALPSLRILYMMDEINNPSLTVKTMGHQWYWSYEYTDYEDLSFDSYMIPTSELKPGELRLLEVDNRVVLPMEMTIRMLVSSEDVLHSWAVPSLGLKTDAIPGRLNQTTLMSSRPGLYYGQCSEICGSNHSFMPIVLELVPLKYFEKWSASML.

Residue M1 is modified to N-formylmethionine. Residues 1-14 (MAYPMQLGFQDATS) lie on the Mitochondrial intermembrane side of the membrane. Residues 15–45 (PIMEELLHFHDHTLMIVFLISSLVLYIISLM) form a helical membrane-spanning segment. Topologically, residues 46-59 (LTTKLTHTSTMDAQ) are mitochondrial matrix. The helical transmembrane segment at 60 to 87 (EVETIWTILPAIILILIALPSLRILYMM) threads the bilayer. At 88-227 (DEINNPSLTV…YFEKWSASML (140 aa)) the chain is on the mitochondrial intermembrane side. Cu cation contacts are provided by H161, C196, E198, C200, H204, and M207. E198 is a Mg(2+) binding site. Y218 carries the post-translational modification Phosphotyrosine.

Belongs to the cytochrome c oxidase subunit 2 family. In terms of assembly, component of the cytochrome c oxidase (complex IV, CIV), a multisubunit enzyme composed of 14 subunits. The complex is composed of a catalytic core of 3 subunits MT-CO1, MT-CO2 and MT-CO3, encoded in the mitochondrial DNA, and 11 supernumerary subunits COX4I, COX5A, COX5B, COX6A, COX6B, COX6C, COX7A, COX7B, COX7C, COX8 and NDUFA4, which are encoded in the nuclear genome. The complex exists as a monomer or a dimer and forms supercomplexes (SCs) in the inner mitochondrial membrane with NADH-ubiquinone oxidoreductase (complex I, CI) and ubiquinol-cytochrome c oxidoreductase (cytochrome b-c1 complex, complex III, CIII), resulting in different assemblies (supercomplex SCI(1)III(2)IV(1) and megacomplex MCI(2)III(2)IV(2)). Found in a complex with TMEM177, COA6, COX18, COX20, SCO1 and SCO2. Interacts with TMEM177 in a COX20-dependent manner. Interacts with COX20. Interacts with COX16. Cu cation is required as a cofactor.

It is found in the mitochondrion inner membrane. It catalyses the reaction 4 Fe(II)-[cytochrome c] + O2 + 8 H(+)(in) = 4 Fe(III)-[cytochrome c] + 2 H2O + 4 H(+)(out). Component of the cytochrome c oxidase, the last enzyme in the mitochondrial electron transport chain which drives oxidative phosphorylation. The respiratory chain contains 3 multisubunit complexes succinate dehydrogenase (complex II, CII), ubiquinol-cytochrome c oxidoreductase (cytochrome b-c1 complex, complex III, CIII) and cytochrome c oxidase (complex IV, CIV), that cooperate to transfer electrons derived from NADH and succinate to molecular oxygen, creating an electrochemical gradient over the inner membrane that drives transmembrane transport and the ATP synthase. Cytochrome c oxidase is the component of the respiratory chain that catalyzes the reduction of oxygen to water. Electrons originating from reduced cytochrome c in the intermembrane space (IMS) are transferred via the dinuclear copper A center (CU(A)) of subunit 2 and heme A of subunit 1 to the active site in subunit 1, a binuclear center (BNC) formed by heme A3 and copper B (CU(B)). The BNC reduces molecular oxygen to 2 water molecules using 4 electrons from cytochrome c in the IMS and 4 protons from the mitochondrial matrix. In Bos indicus (Zebu), this protein is Cytochrome c oxidase subunit 2 (MT-CO2).